The following is a 146-amino-acid chain: Ubiquitin-conjugating enzyme E2 variant 1D (146 aa).

In terms of domain architecture, UBC core spans 13 to 146; sequence PRNFRLLEEL…LVQPPEGTCF (134 aa).

Belongs to the ubiquitin-conjugating enzyme family. Heterodimer with UBC35 or UBC36. Expressed in roots, shoots, leaves, stems, flowers and pollen.

In terms of biological role, has no ubiquitin ligase activity on its own. The heterodimer with UBC catalyzes the synthesis of non-canonical poly-ubiquitin chains that are linked through 'Lys-63'. This type of poly-ubiquitination does not lead to protein degradation by the proteasome. Mediates transcriptional activation of target genes. May play a role in the control of progress through the cell cycle and differentiation. Involved in the error-free DNA repair pathway and contributes to the survival of cells after DNA damage. This chain is Ubiquitin-conjugating enzyme E2 variant 1D (UEV1D), found in Arabidopsis thaliana (Mouse-ear cress).